The following is a 189-amino-acid chain: Peptidyl-tRNA hydrolase (189 aa).

Tyr15 lines the tRNA pocket. Catalysis depends on His20, which acts as the Proton acceptor. TRNA contacts are provided by Tyr65, Asn67, and Asn113.

It belongs to the PTH family. As to quaternary structure, monomer.

Its subcellular location is the cytoplasm. It carries out the reaction an N-acyl-L-alpha-aminoacyl-tRNA + H2O = an N-acyl-L-amino acid + a tRNA + H(+). Hydrolyzes ribosome-free peptidyl-tRNAs (with 1 or more amino acids incorporated), which drop off the ribosome during protein synthesis, or as a result of ribosome stalling. In terms of biological role, catalyzes the release of premature peptidyl moieties from peptidyl-tRNA molecules trapped in stalled 50S ribosomal subunits, and thus maintains levels of free tRNAs and 50S ribosomes. This Caldicellulosiruptor bescii (strain ATCC BAA-1888 / DSM 6725 / KCTC 15123 / Z-1320) (Anaerocellum thermophilum) protein is Peptidyl-tRNA hydrolase.